Reading from the N-terminus, the 123-residue chain is Large ribosomal subunit protein uL29 (123 aa).

Position 19 is an N6-acetyllysine (Lys19). Lys25 participates in a covalent cross-link: Glycyl lysine isopeptide (Lys-Gly) (interchain with G-Cter in SUMO2). Ser29 is subject to Phosphoserine. An N6-acetyllysine modification is found at Lys43. Residues 85 to 123 (PKKTRAMRRRLNKHEESLKTKKQQRKERLYPLRKYAVKA) form a disordered region. Residues 86–96 (KKTRAMRRRLN) show a composition bias toward basic residues.

Belongs to the universal ribosomal protein uL29 family. In terms of assembly, component of the large ribosomal subunit.

Its subcellular location is the cytoplasm. In terms of biological role, component of the large ribosomal subunit. The ribosome is a large ribonucleoprotein complex responsible for the synthesis of proteins in the cell. This Oryctolagus cuniculus (Rabbit) protein is Large ribosomal subunit protein uL29 (RPL35).